A 209-amino-acid chain; its full sequence is COP9 signalosome complex subunit 8 (209 aa).

The 172-residue stretch at glutamate 8 to phenylalanine 179 folds into the PCI domain. A Phosphoserine modification is found at serine 175.

The protein belongs to the CSN8 family. Component of the CSN complex, composed of COPS1/GPS1, COPS2, COPS3, COPS4, COPS5, COPS6, COPS7 (COPS7A or COPS7B), COPS8 and COPS9. In the complex, it probably interacts directly with COPS3, COPS4 and COPS7 (COPS7A or COPS7B).

It localises to the cytoplasm. It is found in the nucleus. Functionally, component of the COP9 signalosome complex (CSN), a complex involved in various cellular and developmental processes. The CSN complex is an essential regulator of the ubiquitin (Ubl) conjugation pathway by mediating the deneddylation of the cullin subunits of SCF-type E3 ligase complexes, leading to decrease the Ubl ligase activity of SCF-type complexes such as SCF, CSA or DDB2. The complex is also involved in phosphorylation of p53/TP53, c-jun/JUN, IkappaBalpha/NFKBIA, ITPK1 and IRF8/ICSBP, possibly via its association with CK2 and PKD kinases. CSN-dependent phosphorylation of TP53 and JUN promotes and protects degradation by the Ubl system, respectively. This chain is COP9 signalosome complex subunit 8 (COPS8), found in Pongo abelii (Sumatran orangutan).